A 323-amino-acid chain; its full sequence is UDP-N-acetylenolpyruvoylglucosamine reductase (323 aa).

An FAD-binding PCMH-type domain is found at 33–214 (IGGPAEALFC…LSAVFTLTHG (182 aa)). Ser243 serves as the catalytic Proton donor. Glu315 is an active-site residue.

Belongs to the MurB family. The cofactor is FAD.

The protein resides in the cytoplasm. It carries out the reaction UDP-N-acetyl-alpha-D-muramate + NADP(+) = UDP-N-acetyl-3-O-(1-carboxyvinyl)-alpha-D-glucosamine + NADPH + H(+). The protein operates within cell wall biogenesis; peptidoglycan biosynthesis. Cell wall formation. This Treponema denticola (strain ATCC 35405 / DSM 14222 / CIP 103919 / JCM 8153 / KCTC 15104) protein is UDP-N-acetylenolpyruvoylglucosamine reductase.